The sequence spans 963 residues: Ubiquitin carboxyl-terminal hydrolase 4 (963 aa).

Positions 11-122 (PDAETQKSEL…GQQPIVRKVV (112 aa)) constitute a DUSP domain. The segment at 27 to 216 (TLQRGAQWYL…LYQGQVLVIE (190 aa)) is necessary for interaction with SART3. A Nuclear export signal motif is present at residues 133-141 (VEVYLLELK). The Ubiquitin-like 1 domain occupies 142 to 226 (LCENSDPTNV…PQNEDGTWPR (85 aa)). Residues 219–277 (NEDGTWPRQTQQSKSSTAPSRNFTTSPKSSASPYSSVSASPIANGDSTNTSGMHSSGVS) are disordered. A compositionally biased stretch (polar residues) spans 225-243 (PRQTQQSKSSTAPSRNFTT). A required for USP4 activation by providing conformational flexibility between the DUSP and catalytic domains region spans residues 229-295 (QQSKSSTAPS…SYNCQESPLT (67 aa)). A compositionally biased stretch (low complexity) spans 244–261 (SPKSSASPYSSVSASPIA). One can recognise a USP domain in the interval 302-923 (CGLGNLGNTC…AAYVLFYQRR (622 aa)). Cys-311 acts as the Nucleophile in catalysis. A regulates ubiquitin dissociation region spans residues 384-386 (PQF). The tract at residues 405–407 (LHE) is necessary for interaction with RBL2. Residue Ser-445 is modified to Phosphoserine. Positions 459-463 (LVCPE) are necessary for interaction with RB1 and RBL2. Zn(2+) contacts are provided by Cys-461 and Cys-464. In terms of domain architecture, Ubiquitin-like 2 spans 483-571 (LKKDRVMEIF…IFVYEVCSTS (89 aa)). Positions 485–775 (KDRVMEIFLV…LQPQKKKKTA (291 aa)) are interacts with DUSP and ubiquitin-like 1 domains and is required for USP4 activation. The disordered stretch occupies residues 634 to 701 (PLPDESGSSP…ATQKKNKGRP (68 aa)). 2 positions are modified to phosphoserine: Ser-675 and Ser-680. Residues 767 to 772 (QPQKKK) carry the Nuclear localization signal motif. Zn(2+)-binding residues include Cys-799 and Cys-802. Residue His-881 is the Proton acceptor of the active site. The segment at 930-963 (TPSLSFPGSSDGGARPSSSQQGTGDDETYSMDTN) is disordered. Positions 953 to 963 (GDDETYSMDTN) are enriched in acidic residues.

The protein belongs to the peptidase C19 family. USP4 subfamily. Interacts with RB1 (both dephosphorylated and hypophosphorylated forms). Interacts with RBL1 and RBL2. Interacts with ADORA2A (via cytoplasmic C-terminus); the interaction is direct. Interacts with SART3; recruits USP4 to its substrate PRPF3. Post-translationally, phosphorylated at Ser-445 by PKB/AKT1 in response to EGF stimulus, promoting its ability deubiquitinate RHEB. Monoubiquitinated by TRIM21. Ubiquitination does not lead to its proteasomal degradation. Autodeubiquitinated.

It localises to the cytoplasm. The protein localises to the nucleus. The catalysed reaction is Thiol-dependent hydrolysis of ester, thioester, amide, peptide and isopeptide bonds formed by the C-terminal Gly of ubiquitin (a 76-residue protein attached to proteins as an intracellular targeting signal).. With respect to regulation, the completion of the deubiquitinase reaction is mediated by the DUSP and ubiquitin-like 1 domains which promotes the release of ubiquitin from the catalytic site enabling subsequent reactions to occur. Deubiquitinating enzyme that removes conjugated ubiquitin from target proteins. Deubiquitinates PDPK1. Deubiquitinates TRIM21. Deubiquitinates receptor ADORA2A which increases the amount of functional receptor at the cell surface. Deubiquitinates HAS2. Deubiquitinates RHEB in response to EGF signaling, promoting mTORC1 signaling. May regulate mRNA splicing through deubiquitination of the U4 spliceosomal protein PRPF3. This may prevent its recognition by the U5 component PRPF8 thereby destabilizing interactions within the U4/U6.U5 snRNP. May also play a role in the regulation of quality control in the ER. This is Ubiquitin carboxyl-terminal hydrolase 4 (USP4) from Bos taurus (Bovine).